Here is a 795-residue protein sequence, read N- to C-terminus: Glutamine--tRNA ligase, cytoplasmic (795 aa).

The tract at residues 188-220 (ADNEKPTKKKEKKEKPAKVEEKKAVVETTAEPS) is disordered. Residues 200-212 (KEKPAKVEEKKAV) show a composition bias toward basic and acidic residues. Positions 277–287 (PEPNGYLHIGH) match the 'HIGH' region motif. Residues 278–280 (EPN) and 284–290 (HIGHAKA) contribute to the ATP site. Asp310 and Tyr450 together coordinate L-glutamine. ATP contacts are provided by residues Thr469, 498–499 (RL), and 506–508 (MSK). The 'KMSKS' region motif lies at 505–509 (VMSKR).

The protein belongs to the class-I aminoacyl-tRNA synthetase family.

It is found in the cytoplasm. The protein localises to the cytosol. It catalyses the reaction tRNA(Gln) + L-glutamine + ATP = L-glutaminyl-tRNA(Gln) + AMP + diphosphate. This Arabidopsis thaliana (Mouse-ear cress) protein is Glutamine--tRNA ligase, cytoplasmic.